Consider the following 471-residue polypeptide: Sulfate adenylyltransferase subunit 1 (471 aa).

The tr-type G domain occupies 22 to 237 (KELLRFLTCG…LESVQITGAK (216 aa)). The G1 stretch occupies residues 31-38 (GSVDDGKS). Residue 31–38 (GSVDDGKS) coordinates GTP. Positions 89-93 (GITID) are G2. Positions 110–113 (DTPG) are G3. Residues 110–114 (DTPGH) and 165–168 (NKMD) each bind GTP. The G4 stretch occupies residues 165–168 (NKMD). A G5 region spans residues 202-204 (SAL).

Belongs to the TRAFAC class translation factor GTPase superfamily. Classic translation factor GTPase family. CysN/NodQ subfamily. Heterodimer composed of CysD, the smaller subunit, and CysN.

The enzyme catalyses sulfate + ATP + H(+) = adenosine 5'-phosphosulfate + diphosphate. The protein operates within sulfur metabolism; hydrogen sulfide biosynthesis; sulfite from sulfate: step 1/3. Its function is as follows. With CysD forms the ATP sulfurylase (ATPS) that catalyzes the adenylation of sulfate producing adenosine 5'-phosphosulfate (APS) and diphosphate, the first enzymatic step in sulfur assimilation pathway. APS synthesis involves the formation of a high-energy phosphoric-sulfuric acid anhydride bond driven by GTP hydrolysis by CysN coupled to ATP hydrolysis by CysD. This is Sulfate adenylyltransferase subunit 1 from Saccharophagus degradans (strain 2-40 / ATCC 43961 / DSM 17024).